Consider the following 176-residue polypeptide: Interleukin-19 (176 aa).

Positions 1-24 (MKTQCASTWLLGMTLILCSVHIYS) are cleaved as a signal peptide. Intrachain disulfides connect Cys28–Cys120, Cys74–Cys126, and Cys75–Cys128. N-linked (GlcNAc...) asparagine glycosylation is present at Asn56. N-linked (GlcNAc...) asparagine glycans are attached at residues Asn127 and Asn134.

Belongs to the IL-10 family.

Its subcellular location is the secreted. Cytokine that functions as an anti-inflammatory and proangiogenic factor. Polarizes adaptive immunity to an anti-inflammatory phenotype through induction of T-helper 2 responses by both down-regulation of IFN-gamma and up-regulation of IL4 and IL5. Produced by osteocytes, stimulates granulopoiesis and neutrophil formation. Exerts its biological effect through a receptor complex consisting of a heterodimer of IL20RA and IL20RB. In turn, activates the Janus kinase (JAK) and signal transducer and activator of transcription (STAT) pathway, and importantly, STAT3. The polypeptide is Interleukin-19 (Il19) (Mus musculus (Mouse)).